Here is a 25-residue protein sequence, read N- to C-terminus: Histone H1.1 (25 aa).

An H15 domain is found at 1–25; the sequence is MVSEAIAALKEREGSSEFAIGKKKE. The interval 1–25 is disordered; that stretch reads MVSEAIAALKEREGSSEFAIGKKKE. Over residues 9–25 the composition is skewed to basic and acidic residues; sequence LKEREGSSEFAIGKKKE.

The protein resides in the nucleus. Its subcellular location is the chromosome. In terms of biological role, histones H1 are necessary for the condensation of nucleosome chains into higher-order structures. The chain is Histone H1.1 from Triticum aestivum (Wheat).